We begin with the raw amino-acid sequence, 146 residues long: NADH-ubiquinone oxidoreductase chain 6 (146 aa).

Transmembrane regions (helical) follow at residues Ile-10 to Val-30, Leu-43 to Ile-63, Val-81 to Ile-101, and Ala-124 to Met-144.

This sequence belongs to the complex I subunit 6 family.

It is found in the mitochondrion membrane. The enzyme catalyses a ubiquinone + NADH + 5 H(+)(in) = a ubiquinol + NAD(+) + 4 H(+)(out). Its function is as follows. Core subunit of the mitochondrial membrane respiratory chain NADH dehydrogenase (Complex I) that is believed to belong to the minimal assembly required for catalysis. Complex I functions in the transfer of electrons from NADH to the respiratory chain. The immediate electron acceptor for the enzyme is believed to be ubiquinone. This is NADH-ubiquinone oxidoreductase chain 6 (NAD6) from Candida albicans (strain SC5314 / ATCC MYA-2876) (Yeast).